Reading from the N-terminus, the 496-residue chain is GTPase Der (496 aa).

EngA-type G domains follow at residues 3–166 (PVVA…FDNL) and 208–381 (IKLA…RSAT). GTP contacts are provided by residues 9–16 (GRPNVGKS), 56–60 (DTGGI), 118–121 (NKVD), 214–221 (GRPNVGKS), 261–265 (DTAGV), and 326–329 (NKWD). The KH-like domain occupies 382–466 (TRVGTSVLTR…PIRIQFQNSD (85 aa)).

The protein belongs to the TRAFAC class TrmE-Era-EngA-EngB-Septin-like GTPase superfamily. EngA (Der) GTPase family. As to quaternary structure, associates with the 50S ribosomal subunit.

GTPase that plays an essential role in the late steps of ribosome biogenesis. The chain is GTPase Der from Vibrio vulnificus (strain YJ016).